A 184-amino-acid chain; its full sequence is Large ribosomal subunit protein uL6 (184 aa).

Belongs to the universal ribosomal protein uL6 family. As to quaternary structure, part of the 50S ribosomal subunit.

In terms of biological role, this protein binds to the 23S rRNA, and is important in its secondary structure. It is located near the subunit interface in the base of the L7/L12 stalk, and near the tRNA binding site of the peptidyltransferase center. The protein is Large ribosomal subunit protein uL6 of Mycoplasma pneumoniae (strain ATCC 29342 / M129 / Subtype 1) (Mycoplasmoides pneumoniae).